The chain runs to 230 residues: Orotidine 5'-phosphate decarboxylase (230 aa).

Residues aspartate 11, lysine 34, 61–70 (DLKLHDIPNT), threonine 117, arginine 179, glutamine 188, glycine 208, and arginine 209 contribute to the substrate site. Lysine 63 serves as the catalytic Proton donor.

The protein belongs to the OMP decarboxylase family. Type 1 subfamily. Homodimer.

It catalyses the reaction orotidine 5'-phosphate + H(+) = UMP + CO2. It participates in pyrimidine metabolism; UMP biosynthesis via de novo pathway; UMP from orotate: step 2/2. In terms of biological role, catalyzes the decarboxylation of orotidine 5'-monophosphate (OMP) to uridine 5'-monophosphate (UMP). This Streptococcus mutans serotype c (strain ATCC 700610 / UA159) protein is Orotidine 5'-phosphate decarboxylase.